The chain runs to 413 residues: Histidine decarboxylase (413 aa).

His-129 provides a ligand contact to substrate. Position 242 is an N6-(pyridoxal phosphate)lysine (Lys-242).

The protein belongs to the group II decarboxylase family. Pyridoxal 5'-phosphate serves as cofactor. As to expression, ripe fruits; not detected in leaves and unripe fruit.

The catalysed reaction is L-histidine + H(+) = histamine + CO2. The sequence is that of Histidine decarboxylase (HDC) from Solanum lycopersicum (Tomato).